Here is a 532-residue protein sequence, read N- to C-terminus: Phosphoenolpyruvate carboxykinase (ATP) (532 aa).

Arg-60, Tyr-194, and Lys-200 together coordinate substrate. ATP contacts are provided by residues Lys-200, His-219, and 237-245 (GLSGTGKTT). Residues Lys-200 and His-219 each contribute to the Mn(2+) site. Asp-258 is a binding site for Mn(2+). The ATP site is built by Glu-286, Arg-324, and Thr-449. Arg-324 serves as a coordination point for substrate.

This sequence belongs to the phosphoenolpyruvate carboxykinase (ATP) family. The cofactor is Mn(2+).

It localises to the cytoplasm. It catalyses the reaction oxaloacetate + ATP = phosphoenolpyruvate + ADP + CO2. It functions in the pathway carbohydrate biosynthesis; gluconeogenesis. Its function is as follows. Involved in the gluconeogenesis. Catalyzes the conversion of oxaloacetate (OAA) to phosphoenolpyruvate (PEP) through direct phosphoryl transfer between the nucleoside triphosphate and OAA. The polypeptide is Phosphoenolpyruvate carboxykinase (ATP) (Cereibacter sphaeroides (strain ATCC 17025 / ATH 2.4.3) (Rhodobacter sphaeroides)).